The following is a 401-amino-acid chain: uncharacterized protein (401 aa).

It belongs to the serpin family.

Functionally, may act as an inhibitor for a host chymotrypsin-like protease. This is an uncharacterized protein from Acanthamoeba polyphaga mimivirus (APMV).